The sequence spans 569 residues: Proline--tRNA ligase (569 aa).

This sequence belongs to the class-II aminoacyl-tRNA synthetase family. ProS type 1 subfamily. In terms of assembly, homodimer.

It localises to the cytoplasm. It carries out the reaction tRNA(Pro) + L-proline + ATP = L-prolyl-tRNA(Pro) + AMP + diphosphate. In terms of biological role, catalyzes the attachment of proline to tRNA(Pro) in a two-step reaction: proline is first activated by ATP to form Pro-AMP and then transferred to the acceptor end of tRNA(Pro). As ProRS can inadvertently accommodate and process non-cognate amino acids such as alanine and cysteine, to avoid such errors it has two additional distinct editing activities against alanine. One activity is designated as 'pretransfer' editing and involves the tRNA(Pro)-independent hydrolysis of activated Ala-AMP. The other activity is designated 'posttransfer' editing and involves deacylation of mischarged Ala-tRNA(Pro). The misacylated Cys-tRNA(Pro) is not edited by ProRS. This chain is Proline--tRNA ligase, found in Dehalococcoides mccartyi (strain ATCC BAA-2266 / KCTC 15142 / 195) (Dehalococcoides ethenogenes (strain 195)).